We begin with the raw amino-acid sequence, 305 residues long: Ribosomal RNA small subunit methyltransferase H (305 aa).

S-adenosyl-L-methionine contacts are provided by residues 30-32 (GGH), D49, F74, D96, and Q103.

Belongs to the methyltransferase superfamily. RsmH family.

Its subcellular location is the cytoplasm. The enzyme catalyses cytidine(1402) in 16S rRNA + S-adenosyl-L-methionine = N(4)-methylcytidine(1402) in 16S rRNA + S-adenosyl-L-homocysteine + H(+). Its function is as follows. Specifically methylates the N4 position of cytidine in position 1402 (C1402) of 16S rRNA. This Francisella tularensis subsp. holarctica (strain LVS) protein is Ribosomal RNA small subunit methyltransferase H.